The sequence spans 136 residues: Aspartate 1-decarboxylase (136 aa).

The active-site Schiff-base intermediate with substrate; via pyruvic acid is serine 25. Position 25 is a pyruvic acid (Ser) (serine 25). Residue threonine 57 participates in substrate binding. Tyrosine 58 serves as the catalytic Proton donor. 73–75 (GAA) lines the substrate pocket.

The protein belongs to the PanD family. Heterooctamer of four alpha and four beta subunits. Pyruvate is required as a cofactor. In terms of processing, is synthesized initially as an inactive proenzyme, which is activated by self-cleavage at a specific serine bond to produce a beta-subunit with a hydroxyl group at its C-terminus and an alpha-subunit with a pyruvoyl group at its N-terminus.

Its subcellular location is the cytoplasm. It carries out the reaction L-aspartate + H(+) = beta-alanine + CO2. The protein operates within cofactor biosynthesis; (R)-pantothenate biosynthesis; beta-alanine from L-aspartate: step 1/1. Functionally, catalyzes the pyruvoyl-dependent decarboxylation of aspartate to produce beta-alanine. The protein is Aspartate 1-decarboxylase of Acidothermus cellulolyticus (strain ATCC 43068 / DSM 8971 / 11B).